The chain runs to 183 residues: Translation initiation factor IF-3 (183 aa).

It belongs to the IF-3 family. Monomer.

It is found in the cytoplasm. Its function is as follows. IF-3 binds to the 30S ribosomal subunit and shifts the equilibrium between 70S ribosomes and their 50S and 30S subunits in favor of the free subunits, thus enhancing the availability of 30S subunits on which protein synthesis initiation begins. In Yersinia enterocolitica serotype O:8 / biotype 1B (strain NCTC 13174 / 8081), this protein is Translation initiation factor IF-3.